A 1134-amino-acid polypeptide reads, in one-letter code: Translation initiation factor IF-2 (1134 aa).

Disordered stretches follow at residues 55–465 and 491–524; these read AQKS…HIIG and LARPGKPKASKKSGSKPTGALRKRKKESTRQRQR. Polar residues-rich tracts occupy residues 56 to 65, 83 to 105, 137 to 147, 208 to 234, and 251 to 264; these read QKSSNSSSPP, SPPTKSEANAKTNASLDKTSSLK, PSISKNNSLKV, QIKQSSDLINRSPKTSPKQPIQEIQTN, and VQSQFNQKPGNNNL. Basic and acidic residues-rich tracts occupy residues 391–403 and 438–450; these read KRGDLNKGPKKDG and PDWDDAAKLEALR. Composition is skewed to basic residues over residues 495-504 and 511-524; these read GKPKASKKSG and LRKRKKESTRQRQR. A tr-type G domain is found at 626 to 798; it reads RRPPVVTVMG…ILLVTEVEDL (173 aa). Residues 635–642 are G1; it reads GHVDHGKT. 635-642 serves as a coordination point for GTP; sequence GHVDHGKT. The segment at 660–664 is G2; it reads GITQH. Positions 685–688 are G3; that stretch reads DTPG. Residues 685-689 and 739-742 contribute to the GTP site; these read DTPGH and NKID. A G4 region spans residues 739-742; that stretch reads NKID. The segment at 775–777 is G5; that stretch reads SAI.

This sequence belongs to the TRAFAC class translation factor GTPase superfamily. Classic translation factor GTPase family. IF-2 subfamily.

It is found in the cytoplasm. Its function is as follows. One of the essential components for the initiation of protein synthesis. Protects formylmethionyl-tRNA from spontaneous hydrolysis and promotes its binding to the 30S ribosomal subunits. Also involved in the hydrolysis of GTP during the formation of the 70S ribosomal complex. This is Translation initiation factor IF-2 from Prochlorococcus marinus (strain SARG / CCMP1375 / SS120).